The following is a 954-amino-acid chain: cGMP-specific 3',5'-cyclic phosphodiesterase alpha (954 aa).

The Cytoplasmic segment spans residues M1–K259. Residues L260–F280 form a helical membrane-spanning segment. The Extracellular portion of the chain corresponds to M281–S296. The helical transmembrane segment at V297–L317 threads the bilayer. The Cytoplasmic segment spans residues R318–Y327. Residues S328–F348 form a helical membrane-spanning segment. Residues K349–N365 are Extracellular-facing. A helical transmembrane segment spans residues F366–F386. The Cytoplasmic segment spans residues L387–R401. The chain crosses the membrane as a helical span at residues F402–F422. Residues Y423–N432 lie on the Extracellular side of the membrane. A helical transmembrane segment spans residues F433 to M453. Over S454 to E954 the chain is Cytoplasmic. The region spanning N586 to N930 is the PDEase domain. Catalysis depends on H680, which acts as the Proton donor. H680 to H684 contributes to the 3',5'-cyclic GMP binding site. Zn(2+) contacts are provided by H684, H720, D721, and D832. Residues D721, D832, and Q884 each contribute to the 3',5'-cyclic GMP site. D721 is a binding site for Mg(2+).

It belongs to the cyclic nucleotide phosphodiesterase family. The cofactor is Zn(2+). Mg(2+) is required as a cofactor.

It localises to the membrane. The catalysed reaction is 3',5'-cyclic GMP + H2O = GMP + H(+). The protein operates within purine metabolism; 3',5'-cyclic GMP degradation; GMP from 3',5'-cyclic GMP: step 1/1. With respect to regulation, not inhibited by cAMP. Inhibited by zaprinast. In terms of biological role, specifically hydrolyzes the second messenger cGMP, which is a key regulator of many important physiological processes. This is cGMP-specific 3',5'-cyclic phosphodiesterase alpha from Plasmodium falciparum (isolate 3D7).